Reading from the N-terminus, the 400-residue chain is D(3) dopamine receptor (400 aa).

The Extracellular portion of the chain corresponds to 1–32; sequence MAPLSQLSGHLNYTCGVENSTGASQARPHAYY. Residues Asn12 and Asn19 are each glycosylated (N-linked (GlcNAc...) asparagine). A helical transmembrane segment spans residues 33-55; it reads ALSYCALILAIVFGNGLVCMAVL. At 56-65 the chain is on the cytoplasmic side; the sequence is KERALQTTTN. Residues 66-88 traverse the membrane as a helical segment; the sequence is YLVVSLAVADLLVATLVMPWVVY. Residues 89–104 lie on the Extracellular side of the membrane; sequence LEVTGGVWNFSRVCCD. An N-linked (GlcNAc...) asparagine glycan is attached at Asn97. Cysteines 103 and 181 form a disulfide. A helical transmembrane segment spans residues 105–126; the sequence is VFVTLDVMMCTASILNLCAISI. Residues 127–149 lie on the Cytoplasmic side of the membrane; the sequence is DRYTAVVMPVHYQHGTGQSSCRR. Residues 150–170 traverse the membrane as a helical segment; it reads VTLMITAVWVLAFAVSCPLLF. Over 171–187 the chain is Extracellular; it reads GFNTTGDPTVCSISNPD. N-linked (GlcNAc...) asparagine glycosylation is present at Asn173. A helical membrane pass occupies residues 188-209; the sequence is FVIYSSVVSFYLPFGVTVLVYA. Topologically, residues 210-329 are cytoplasmic; that stretch reads RIYVVLKQRR…VPLREKKATQ (120 aa). A helical transmembrane segment spans residues 330–351; the sequence is MVAIVLGAFIVCWLPFFLTHVL. Over 352 to 366 the chain is Extracellular; sequence NTHCQTCHVSPELYS. The cysteines at positions 355 and 358 are disulfide-linked. A helical transmembrane segment spans residues 367 to 386; the sequence is ATTWLGYVNSALNPVIYTTF. The Cytoplasmic portion of the chain corresponds to 387–400; the sequence is NIEFRKAFLKILSC.

Belongs to the G-protein coupled receptor 1 family. As to quaternary structure, interacts with CLIC6. Interacts with GRK4. Interacts with PALM. Interacts with FLNA (via filamin repeat 21); increases PKA-mediated phosphorylation of FLNA. Phosphorylated by GRK4. In terms of processing, palmitoylated.

It localises to the cell membrane. Functionally, dopamine receptor whose activity is mediated by G proteins which inhibit adenylyl cyclase. Promotes cell proliferation. The protein is D(3) dopamine receptor (DRD3) of Chlorocebus aethiops (Green monkey).